A 76-amino-acid polypeptide reads, in one-letter code: Small ribosomal subunit protein bS18 (76 aa).

Belongs to the bacterial ribosomal protein bS18 family. Part of the 30S ribosomal subunit. Forms a tight heterodimer with protein bS6.

Functionally, binds as a heterodimer with protein bS6 to the central domain of the 16S rRNA, where it helps stabilize the platform of the 30S subunit. The polypeptide is Small ribosomal subunit protein bS18 (Marinobacter nauticus (strain ATCC 700491 / DSM 11845 / VT8) (Marinobacter aquaeolei)).